The chain runs to 264 residues: Tritrans,polycis-undecaprenyl-diphosphate synthase (geranylgeranyl-diphosphate specific) (264 aa).

Residue Asp43 is part of the active site. Asp43 serves as a coordination point for Mg(2+). Residues 44–47, Trp48, His60, and 88–90 contribute to the substrate site; these read GNRR and STE. Asn91 acts as the Proton acceptor in catalysis. Residues Phe92, Arg94, Arg213, and 219 to 221 each bind substrate; that span reads RIS. Glu232 provides a ligand contact to Mg(2+).

It belongs to the UPP synthase family. Homodimer. The cofactor is Mg(2+).

It catalyses the reaction geranylgeranyl diphosphate + 7 isopentenyl diphosphate = tri-trans,hepta-cis-undecaprenyl diphosphate + 7 diphosphate. Its function is as follows. Catalyzes the sequential condensation of isopentenyl diphosphate (IPP) with geranylgeranyl diphosphate (GGPP) to yield (2Z,6Z,10Z,14Z,18Z,22Z,26Z,30E,34E,38E)-undecaprenyl diphosphate (tritrans,heptacis-UPP). It is probably the precursor of glycosyl carrier lipids. The polypeptide is Tritrans,polycis-undecaprenyl-diphosphate synthase (geranylgeranyl-diphosphate specific) (Pyrococcus horikoshii (strain ATCC 700860 / DSM 12428 / JCM 9974 / NBRC 100139 / OT-3)).